The primary structure comprises 554 residues: Polyamine aminopropyltransferase 2 (554 aa).

Residues 1–13 (MIEPHAPAPPGSP) are compositionally biased toward pro residues. The interval 1–20 (MIEPHAPAPPGSPPSWGGPC) is disordered. 6 helical membrane-spanning segments follow: residues 37-57 (FLVL…ELEL), 69-89 (VTQA…GSLA), 106-126 (AALA…FAWT), 139-159 (ILLV…VPLL), 184-204 (VGAL…LGQL), and 206-226 (GALL…LGLF). The tract at residues 235 to 516 (RWLLLTANAV…RTAPAPRLDP (282 aa)) is spermidine synthase. Residues 247–492 (ALLATATVLA…SVPGPRRAAA (246 aa)) form the PABS domain. Glutamine 281 provides a ligand contact to S-methyl-5'-thioadenosine. 2 residues coordinate spermidine: histidine 313 and aspartate 335. S-methyl-5'-thioadenosine-binding positions include glutamate 355 and 389-390 (DA). Aspartate 408 (proton acceptor) is an active-site residue. Positions 476 to 495 (DTGPGPGSVPGPRRAAAGPP) are disordered. The span at 485–495 (PGPRRAAAGPP) shows a compositional bias: low complexity.

This sequence belongs to the spermidine/spermine synthase family. Homodimer or homotetramer.

Its subcellular location is the cell membrane. The enzyme catalyses S-adenosyl 3-(methylsulfanyl)propylamine + putrescine = S-methyl-5'-thioadenosine + spermidine + H(+). It functions in the pathway amine and polyamine biosynthesis; spermidine biosynthesis; spermidine from putrescine: step 1/1. Its function is as follows. Catalyzes the irreversible transfer of a propylamine group from the amino donor S-adenosylmethioninamine (decarboxy-AdoMet) to putrescine (1,4-diaminobutane) to yield spermidine. The polypeptide is Polyamine aminopropyltransferase 2 (Streptomyces coelicolor (strain ATCC BAA-471 / A3(2) / M145)).